We begin with the raw amino-acid sequence, 361 residues long: Serine/threonine-protein kinase SRK2I (361 aa).

Residues 22-278 (YDFVKDIGSG…IPEIKTHSWF (257 aa)) form the Protein kinase domain. Residues 28 to 36 (IGSGNFGVA) and Lys-51 contribute to the ATP site. Asp-141 functions as the Proton acceptor in the catalytic mechanism.

It belongs to the protein kinase superfamily. Ser/Thr protein kinase family. In terms of assembly, interacts with ABI1. Interacts with I-2 and TOPP1. Interacts with FREE1 (via C-terminus). Autophosphorylated in vitro. Expressed at low levels in seeds, seedlings, roots (especially in tips), stems, leaves, shoots, flowers and siliques.

The catalysed reaction is L-seryl-[protein] + ATP = O-phospho-L-seryl-[protein] + ADP + H(+). It carries out the reaction L-threonyl-[protein] + ATP = O-phospho-L-threonyl-[protein] + ADP + H(+). Its activity is regulated as follows. Activated by autophosphorylation of its activation loop. In terms of biological role, together with SRK2D, key component and activator of the abscisic acid (ABA) signaling pathway that regulates numerous ABA responses, such as seed germination, Pro accumulation, root growth inhibition, dormancy and seedling growth, and, to a lesser extent, stomatal closure. In response to ABA, phosphorylates the ESCRT-I complex component FREE1, which is required for ABA-induced FREE1 nuclear import. The protein is Serine/threonine-protein kinase SRK2I (SRK2I) of Arabidopsis thaliana (Mouse-ear cress).